The primary structure comprises 81 residues: Adenoregulin-related peptide (81 aa).

Residues 1-22 (MAFLKKSLLLVLFLGLVSLSIC) form the signal peptide. Positions 23–43 (EEEKRENEDEEEQEDDEQSEM) are excised as a propeptide. The tract at residues 24-46 (EEKRENEDEEEQEDDEQSEMKRG) is disordered. Over residues 30 to 40 (EDEEEQEDDEQ) the composition is skewed to acidic residues. At Ile-78 the chain carries Isoleucine amide. Residues 79-81 (GEQ) constitute a propeptide that is removed on maturation.

As to expression, expressed by the skin glands.

The protein resides in the secreted. Its function is as follows. Has antibacterial activity against Gram-positive bacterium M.luteus NCT C2665 and against Gram-negative bacterium E.coli K12D31. This is Adenoregulin-related peptide from Agalychnis callidryas (Red-eyed tree frog).